We begin with the raw amino-acid sequence, 415 residues long: Glucose-1-phosphate adenylyltransferase (415 aa).

Alpha-D-glucose 1-phosphate is bound by residues Tyr-100, Gly-165, 182 to 183 (EK), and Ser-200.

The protein belongs to the bacterial/plant glucose-1-phosphate adenylyltransferase family. Homotetramer.

The catalysed reaction is alpha-D-glucose 1-phosphate + ATP + H(+) = ADP-alpha-D-glucose + diphosphate. Its pathway is glycan biosynthesis; glycogen biosynthesis. Functionally, involved in the biosynthesis of ADP-glucose, a building block required for the elongation reactions to produce glycogen. Catalyzes the reaction between ATP and alpha-D-glucose 1-phosphate (G1P) to produce pyrophosphate and ADP-Glc. This is Glucose-1-phosphate adenylyltransferase from Bifidobacterium animalis subsp. lactis (strain AD011).